Reading from the N-terminus, the 129-residue chain is Large ribosomal subunit protein bL20 (129 aa).

This sequence belongs to the bacterial ribosomal protein bL20 family.

In terms of biological role, binds directly to 23S ribosomal RNA and is necessary for the in vitro assembly process of the 50S ribosomal subunit. It is not involved in the protein synthesizing functions of that subunit. This is Large ribosomal subunit protein bL20 from Mycobacteroides abscessus (strain ATCC 19977 / DSM 44196 / CCUG 20993 / CIP 104536 / JCM 13569 / NCTC 13031 / TMC 1543 / L948) (Mycobacterium abscessus).